Here is a 49-residue protein sequence, read N- to C-terminus: Sperm protamine P1 (49 aa).

It belongs to the protamine P1 family. In terms of tissue distribution, testis.

Its subcellular location is the nucleus. The protein localises to the chromosome. Its function is as follows. Protamines substitute for histones in the chromatin of sperm during the haploid phase of spermatogenesis. They compact sperm DNA into a highly condensed, stable and inactive complex. The protein is Sperm protamine P1 (PRM1) of Rhinopoma hardwickii (Lesser mouse-tailed bat).